The following is a 696-amino-acid chain: L-amino-acid oxidase (696 aa).

A propeptide spanning residues 1-130 (MKWSAAAGAA…IKMRRDLKAR (130 aa)) is cleaved from the precursor. Residues glutamate 207, arginine 215, 236–237 (MR), and valine 440 each bind FAD. Arginine 237 lines the substrate pocket. A substrate-binding site is contributed by tyrosine 564. FAD is bound by residues glutamate 649 and 658–661 (IASA).

The protein belongs to the flavin monoamine oxidase family. Requires FAD as cofactor.

It carries out the reaction an L-alpha-amino acid + O2 + H2O = a 2-oxocarboxylate + H2O2 + NH4(+). This is L-amino-acid oxidase (lox) from Neurospora crassa (strain ATCC 24698 / 74-OR23-1A / CBS 708.71 / DSM 1257 / FGSC 987).